We begin with the raw amino-acid sequence, 137 residues long: Small ribosomal subunit protein eS17 (137 aa).

It belongs to the eukaryotic ribosomal protein eS17 family. Component of the small ribosomal subunit. Mature ribosomes consist of a small (40S) and a large (60S) subunit. The 40S subunit contains about 32 different proteins and 1 molecule of RNA (18S). The 60S subunit contains 45 different proteins and 3 molecules of RNA (25S, 5.8S and 5S).

Its subcellular location is the cytoplasm. Functionally, component of the ribosome, a large ribonucleoprotein complex responsible for the synthesis of proteins in the cell. The small ribosomal subunit (SSU) binds messenger RNAs (mRNAs) and translates the encoded message by selecting cognate aminoacyl-transfer RNA (tRNA) molecules. The large subunit (LSU) contains the ribosomal catalytic site termed the peptidyl transferase center (PTC), which catalyzes the formation of peptide bonds, thereby polymerizing the amino acids delivered by tRNAs into a polypeptide chain. The nascent polypeptides leave the ribosome through a tunnel in the LSU and interact with protein factors that function in enzymatic processing, targeting, and the membrane insertion of nascent chains at the exit of the ribosomal tunnel. The chain is Small ribosomal subunit protein eS17 (RPS17B) from Candida albicans (strain SC5314 / ATCC MYA-2876) (Yeast).